A 569-amino-acid chain; its full sequence is Urease subunit beta (569 aa).

A Urease domain is found at 131-569 (GGIDTHIHFI…VSLAQLFSIF (439 aa)). Positions 136, 138, and 219 each coordinate Ni(2+). N6-carboxylysine is present on K219. H221 is a substrate binding site. Residues H248 and H274 each coordinate Ni(2+). Catalysis depends on H322, which acts as the Proton donor. D362 lines the Ni(2+) pocket.

The protein belongs to the metallo-dependent hydrolases superfamily. Urease alpha subunit family. Heterohexamer of 3 UreA (alpha) and 3 UreB (beta) subunits. Four heterohexamers assemble to form a 16 nm dodecameric complex. The cofactor is Ni cation. In terms of processing, carboxylation allows a single lysine to coordinate two nickel ions.

It is found in the cytoplasm. The enzyme catalyses urea + 2 H2O + H(+) = hydrogencarbonate + 2 NH4(+). The protein operates within nitrogen metabolism; urea degradation; CO(2) and NH(3) from urea (urease route): step 1/1. Functionally, ammonia produced by ureolysis increases the gastric pH thereby providing an environment permissive for colonization of the stomach. The sequence is that of Urease subunit beta from Helicobacter pylori (strain J99 / ATCC 700824) (Campylobacter pylori J99).